A 271-amino-acid chain; its full sequence is Secretagogin (271 aa).

EF-hand domains are found at residues 8–43 (LDAA…LLKK), 53–88 (KVQG…EDEN), 100–135 (DNSV…LFLQ), 144–179 (KLDE…QENF), 192–227 (ERKS…MMEL), and 235–271 (VDLD…KANP). Ca(2+) is bound by residues Asp-21, Asp-23, Asn-25, Tyr-27, and Glu-32. The Ca(2+) site is built by Asp-113, Asp-115, Ser-117, Glu-124, Asn-159, Asp-161, Arg-163, Asp-168, Asp-205, Ser-207, Thr-209, Glu-216, Asp-249, Asn-251, Asp-253, Lys-255, and Glu-260.

Its subcellular location is the cytoplasm. In Xenopus laevis (African clawed frog), this protein is Secretagogin (scgn).